The following is a 431-amino-acid chain: Enolase (431 aa).

Glutamine 163 is a (2R)-2-phosphoglycerate binding site. The active-site Proton donor is glutamate 205. The Mg(2+) site is built by aspartate 242, glutamate 288, and aspartate 315. Positions 340, 369, 370, and 391 each coordinate (2R)-2-phosphoglycerate. Lysine 340 serves as the catalytic Proton acceptor.

Belongs to the enolase family. Requires Mg(2+) as cofactor.

It localises to the cytoplasm. The protein resides in the secreted. Its subcellular location is the cell surface. The catalysed reaction is (2R)-2-phosphoglycerate = phosphoenolpyruvate + H2O. It functions in the pathway carbohydrate degradation; glycolysis; pyruvate from D-glyceraldehyde 3-phosphate: step 4/5. In terms of biological role, catalyzes the reversible conversion of 2-phosphoglycerate (2-PG) into phosphoenolpyruvate (PEP). It is essential for the degradation of carbohydrates via glycolysis. This is Enolase from Bacillus mycoides (strain KBAB4) (Bacillus weihenstephanensis).